We begin with the raw amino-acid sequence, 1003 residues long: Retinoblastoma-related protein 1 (1003 aa).

Residues 405–607 (TPVSTAMTTA…EKGSSMYNSL (203 aa)) are domain A. The pocket stretch occupies residues 405-860 (TPVSTAMTTA…NEMFIPSVKP (456 aa)). The tract at residues 608–729 (AVAKPSLAAE…PGGGGETCAE (122 aa)) is spacer. The tract at residues 730-860 (TAINVFFGKI…NEMFIPSVKP (131 aa)) is domain B. The segment at 868–899 (AGNNSEKNDHNDGQGPASPKPSPFPKLPDMSP) is disordered.

The protein belongs to the retinoblastoma protein (RB) family. Expressed in roots, stems, leaves and flowers.

Its subcellular location is the nucleus. In terms of biological role, regulator of biological processes that recruits a histone deacetylase to control gene transcription. Formation of stable complexes with geminiviridae replication-associated proteins may create a cellular environment which favors viral DNA replication. May play a role in the entry into mitosis, negatively regulating the cell proliferation during leaf, stem, and flower development. Critical regulator of the endocycle. The sequence is that of Retinoblastoma-related protein 1 (RBR1) from Nicotiana benthamiana.